Consider the following 76-residue polypeptide: Large ribosomal subunit protein eL20 (76 aa).

The protein belongs to the eukaryotic ribosomal protein eL20 family. As to quaternary structure, part of the 50S ribosomal subunit. Binds 23S rRNA.

This chain is Large ribosomal subunit protein eL20, found in Methanococcus maripaludis (strain DSM 14266 / JCM 13030 / NBRC 101832 / S2 / LL).